Here is a 92-residue protein sequence, read N- to C-terminus: MTRSAKKGPFCDASLVKKVEVAQANKDKKPIKTWSRRSTILPDFIGLTIAVHNGRQHVPVYVSENMVGHKLGEFALTRTFKGHAADKKVTKK.

Belongs to the universal ribosomal protein uS19 family.

Functionally, protein S19 forms a complex with S13 that binds strongly to the 16S ribosomal RNA. The sequence is that of Small ribosomal subunit protein uS19 from Polynucleobacter asymbioticus (strain DSM 18221 / CIP 109841 / QLW-P1DMWA-1) (Polynucleobacter necessarius subsp. asymbioticus).